A 469-amino-acid chain; its full sequence is Argininosuccinate lyase (469 aa).

This sequence belongs to the lyase 1 family. Argininosuccinate lyase subfamily.

The protein localises to the cytoplasm. It carries out the reaction 2-(N(omega)-L-arginino)succinate = fumarate + L-arginine. Its pathway is amino-acid biosynthesis; L-arginine biosynthesis; L-arginine from L-ornithine and carbamoyl phosphate: step 3/3. In Polaromonas naphthalenivorans (strain CJ2), this protein is Argininosuccinate lyase.